The primary structure comprises 398 residues: Acetate kinase (398 aa).

Asparagine 7 serves as a coordination point for Mg(2+). Residue lysine 14 coordinates ATP. Arginine 96 serves as a coordination point for substrate. Aspartate 153 (proton donor/acceptor) is an active-site residue. ATP contacts are provided by residues 210-214 (HLGNG), 284-286 (DLR), and 332-336 (GIGEH). Glutamate 385 contacts Mg(2+).

It belongs to the acetokinase family. Homodimer. Mg(2+) serves as cofactor. Requires Mn(2+) as cofactor.

Its subcellular location is the cytoplasm. The catalysed reaction is acetate + ATP = acetyl phosphate + ADP. It participates in metabolic intermediate biosynthesis; acetyl-CoA biosynthesis; acetyl-CoA from acetate: step 1/2. Functionally, catalyzes the formation of acetyl phosphate from acetate and ATP. Can also catalyze the reverse reaction. The protein is Acetate kinase of Acaryochloris marina (strain MBIC 11017).